The following is a 164-amino-acid chain: Phosphopantetheine adenylyltransferase (164 aa).

Ser10 is a substrate binding site. ATP contacts are provided by residues 10 to 11 (SF) and His18. The substrate site is built by Lys42, Met74, and Arg88. Residues 89-91 (GLR), Glu99, and 124-130 (YFFVSAR) contribute to the ATP site.

The protein belongs to the bacterial CoaD family. In terms of assembly, homohexamer. The cofactor is Mg(2+).

It localises to the cytoplasm. The enzyme catalyses (R)-4'-phosphopantetheine + ATP + H(+) = 3'-dephospho-CoA + diphosphate. Its pathway is cofactor biosynthesis; coenzyme A biosynthesis; CoA from (R)-pantothenate: step 4/5. Reversibly transfers an adenylyl group from ATP to 4'-phosphopantetheine, yielding dephospho-CoA (dPCoA) and pyrophosphate. This is Phosphopantetheine adenylyltransferase from Anaeromyxobacter dehalogenans (strain 2CP-C).